A 406-amino-acid polypeptide reads, in one-letter code: Secretion apparatus protein BsaZ (406 aa).

4 consecutive transmembrane segments (helical) span residues 28-48 (IVAL…VDLT), 80-100 (IAAP…LVQS), 137-157 (ALLY…LYHA), and 175-195 (IVLT…VLIL). Residues 341 to 406 (AANRGGPPPE…APARTGDQNA (66 aa)) are disordered. Over residues 370–399 (DACADNAFPDDAPPGAAAPNAGSPDGGAPA) the composition is skewed to low complexity.

This sequence belongs to the type III secretion exporter family.

The protein resides in the cell membrane. Part of the bsa type III secretion system, is involved in the intracellular replication of invading bacteria inside the host cell. Probably necessary for the lysis of the vacuole membrane and escape into the host cell cytoplasm. This is Secretion apparatus protein BsaZ (bsaZ) from Burkholderia pseudomallei (strain 668).